Consider the following 582-residue polypeptide: DNA mismatch repair protein MutL (582 aa).

The protein belongs to the DNA mismatch repair MutL/HexB family.

This protein is involved in the repair of mismatches in DNA. It is required for dam-dependent methyl-directed DNA mismatch repair. May act as a 'molecular matchmaker', a protein that promotes the formation of a stable complex between two or more DNA-binding proteins in an ATP-dependent manner without itself being part of a final effector complex. The sequence is that of DNA mismatch repair protein MutL from Chlamydia abortus (strain DSM 27085 / S26/3) (Chlamydophila abortus).